We begin with the raw amino-acid sequence, 48 residues long: Large ribosomal subunit protein bL32 (48 aa).

The span at 1–20 shows a compositional bias: basic residues; it reads MAVPKRRVSKTRAAKRRTHY. The tract at residues 1 to 48 is disordered; that stretch reads MAVPKRRVSKTRAAKRRTHYKVSLPIPVKDKDGSWKLPHRINTKTGEY.

It belongs to the bacterial ribosomal protein bL32 family.

This Campylobacter hominis (strain ATCC BAA-381 / DSM 21671 / CCUG 45161 / LMG 19568 / NCTC 13146 / CH001A) protein is Large ribosomal subunit protein bL32.